A 474-amino-acid polypeptide reads, in one-letter code: Iroquois-class homeodomain protein IRX-2 (474 aa).

Residues 115 to 177 (DPAYRKNATR…NARRRLKKEN (63 aa)) constitute a DNA-binding region (homeobox; TALE-type). Disordered stretches follow at residues 177–220 (NKMT…EDEG), 262–373 (EDLE…PGGS), and 420–461 (PGET…DTSE). S187 carries the phosphoserine modification. Positions 196 to 210 (DASRSKEESSDKAQD) are enriched in basic and acidic residues. Over residues 262 to 275 (EDLEDEEDEEDECE) the composition is skewed to acidic residues. 2 stretches are compositionally biased toward low complexity: residues 293–305 (EAPL…EAAP) and 358–373 (PAAA…PGGS).

This sequence belongs to the TALE/IRO homeobox family. As to expression, expressed in specific and overlapping patterns with Irx1 and Irx3 in the developing and adult metanephric kidney. In the adult metanephros, renal expression is found in the loop of Henle in the S3 proximal tubule segment and in the thick ascending limb (TAL) of the distal tubule.

The protein localises to the nucleus. This Mus musculus (Mouse) protein is Iroquois-class homeodomain protein IRX-2 (Irx2).